A 135-amino-acid polypeptide reads, in one-letter code: Small ribosomal subunit protein uS12c (135 aa).

It belongs to the universal ribosomal protein uS12 family. As to quaternary structure, part of the 30S ribosomal subunit.

It localises to the plastid. The protein localises to the chloroplast. Its function is as follows. With S4 and S5 plays an important role in translational accuracy. Located at the interface of the 30S and 50S subunits. This chain is Small ribosomal subunit protein uS12c (rps12), found in Adiantum capillus-veneris (Maidenhair fern).